A 198-amino-acid chain; its full sequence is Recombination protein RecR (198 aa).

The C4-type zinc finger occupies 57–72 (CEKCNTFTEAQICEVC). Residues 80-175 (TLLCVVETPA…AVTRLARGVP (96 aa)) form the Toprim domain.

It belongs to the RecR family.

Its function is as follows. May play a role in DNA repair. It seems to be involved in an RecBC-independent recombinational process of DNA repair. It may act with RecF and RecO. The protein is Recombination protein RecR of Paraburkholderia xenovorans (strain LB400).